Consider the following 252-residue polypeptide: Hydroxyacylglutathione hydrolase (252 aa).

7 residues coordinate Zn(2+): His54, His56, Asp58, His59, His111, Asp128, and His166.

It belongs to the metallo-beta-lactamase superfamily. Glyoxalase II family. In terms of assembly, monomer. It depends on Zn(2+) as a cofactor.

It catalyses the reaction an S-(2-hydroxyacyl)glutathione + H2O = a 2-hydroxy carboxylate + glutathione + H(+). The protein operates within secondary metabolite metabolism; methylglyoxal degradation; (R)-lactate from methylglyoxal: step 2/2. Thiolesterase that catalyzes the hydrolysis of S-D-lactoyl-glutathione to form glutathione and D-lactic acid. The polypeptide is Hydroxyacylglutathione hydrolase (Photobacterium profundum (strain SS9)).